We begin with the raw amino-acid sequence, 766 residues long: BMP/retinoic acid-inducible neural-specific protein 3 (766 aa).

Residues 1–33 (MIWRRRAGAELSSLMALWEWIVLSLHCWVLAVA) form the signal peptide. The region spanning 74–264 (RYKIYREFGR…FVQAALSYIA (191 aa)) is the MACPF domain. N-linked (GlcNAc...) asparagine glycans are attached at residues N168, N337, N456, N562, N609, and N641.

The protein belongs to the BRINP family. In terms of tissue distribution, expressed in olfactory bulb, cerebellum and neuronal layers in hippocampus.

Its subcellular location is the secreted. The protein localises to the mitochondrion. Its function is as follows. Inhibits neuronal cell proliferation by negative regulation of the cell cycle transition. Promotes pituitary gonadotrope cell proliferation, migration and invasion, when overexpressed. May play a role in cell pituitary tumor development. In Rattus norvegicus (Rat), this protein is BMP/retinoic acid-inducible neural-specific protein 3 (Brinp3).